The sequence spans 603 residues: DNA-directed RNA polymerase subunit beta' N-terminal section (603 aa).

Zn(2+) is bound by residues cysteine 283, cysteine 285, cysteine 329, and cysteine 332.

It belongs to the RNA polymerase beta' chain family. RpoC1 subfamily. In terms of assembly, in plastids the minimal PEP RNA polymerase catalytic core is composed of four subunits: alpha, beta, beta', and beta''. When a (nuclear-encoded) sigma factor is associated with the core the holoenzyme is formed, which can initiate transcription. Zn(2+) is required as a cofactor.

Its subcellular location is the plastid. It is found in the chloroplast. The catalysed reaction is RNA(n) + a ribonucleoside 5'-triphosphate = RNA(n+1) + diphosphate. Its function is as follows. DNA-dependent RNA polymerase catalyzes the transcription of DNA into RNA using the four ribonucleoside triphosphates as substrates. The polypeptide is DNA-directed RNA polymerase subunit beta' N-terminal section (rpoC1A) (Chlamydomonas reinhardtii (Chlamydomonas smithii)).